Here is a 305-residue protein sequence, read N- to C-terminus: Pseudouridine-5'-phosphate glycosidase (305 aa).

Residue Glu-30 is the Proton donor of the active site. Substrate contacts are provided by Lys-91 and Val-111. Asp-143 provides a ligand contact to Mn(2+). A substrate-binding site is contributed by 145 to 147 (SAD). The active-site Nucleophile is the Lys-164.

The protein belongs to the pseudouridine-5'-phosphate glycosidase family. As to quaternary structure, homotrimer. Mn(2+) is required as a cofactor.

It catalyses the reaction D-ribose 5-phosphate + uracil = psi-UMP + H2O. In terms of biological role, catalyzes the reversible cleavage of pseudouridine 5'-phosphate (PsiMP) to ribose 5-phosphate and uracil. Functions biologically in the cleavage direction, as part of a pseudouridine degradation pathway. In Mesorhizobium japonicum (strain LMG 29417 / CECT 9101 / MAFF 303099) (Mesorhizobium loti (strain MAFF 303099)), this protein is Pseudouridine-5'-phosphate glycosidase.